Reading from the N-terminus, the 783-residue chain is Transcription factor E4F1 (783 aa).

The tract at residues 40 to 84 is required for ubiquitin ligase activity; the sequence is GFLGLPAPFSEEDEDDVHRCGRCQVEFTALEDFVQHKIQKTCHRA. At serine 49 the chain carries Phosphoserine. A mediates dimerization, DNA-binding, transcription repression of CCNA2 and interaction with HMGA2 region spans residues 185–264; it reads LLVNKEGRYV…GKSFRESGAL (80 aa). 2 C2H2-type zinc fingers span residues 193–215 and 221–243; these read YVCM…MVTH and HECK…HRRH. Residues 249–273 form a C2H2-type 3; degenerate zinc finger; the sequence is YKCAKCGKSFRESGALTRHLKSLTP. Positions 368–565 are mediates interaction with CDKN2A; that stretch reads NLLHQAMQNS…REKGSLVRHV (198 aa). The interval 386–407 is disordered; that stretch reads GEESALEPAPPSGSSPQCLGDG. 5 consecutive C2H2-type zinc fingers follow at residues 434–456, 462–484, 490–512, 518–540, and 546–568; these read HPCP…KRGH, FTCT…QEVH, FRCG…RRVH, FPCP…FRTH, and HVCQ…VRHH. The tract at residues 434 to 598 is interaction with BMI1; the sequence is HPCPQCSETF…LNRHLRTKGG (165 aa). Residues 520–579 form a mediates interaction with TP53 region; the sequence is CPQCGKRYKTKNAQQVHFRTHLEEKPHVCQFCSRGFREKGSLVRHVRHHTGEKPFKCYKC. Residues 574 to 596 form a C2H2-type 9; degenerate zinc finger; it reads FKCYKCGRGFAEHGTLNRHLRTK. A mediates interaction with RASSF1 region spans residues 574–596; the sequence is FKCYKCGRGFAEHGTLNRHLRTK.

As to quaternary structure, homodimer; binds DNA as a dimer. Forms a complex with CDKN2A and TP53. Interacts with HDAC1, HMGA2 and RASSF1. Interactions with TP53, RB1, ANP32A and probably BMI1 and FHL2 regulate E4F1 activity. Post-translationally, phosphorylated; phosphorylation is cell cycle-dependent and regulates DNA-binding activity and function. May be sumoylated by UBE2I upon interaction with CDKN2A. In terms of tissue distribution, ubiquitously expressed.

Its subcellular location is the nucleus. It localises to the nucleoplasm. The protein resides in the cytoplasm. The enzyme catalyses S-ubiquitinyl-[E2 ubiquitin-conjugating enzyme]-L-cysteine + [acceptor protein]-L-lysine = [E2 ubiquitin-conjugating enzyme]-L-cysteine + N(6)-ubiquitinyl-[acceptor protein]-L-lysine.. It functions in the pathway protein modification; protein ubiquitination. May function as a transcriptional repressor. May also function as a ubiquitin ligase mediating ubiquitination of chromatin-associated TP53. Functions in cell survival and proliferation through control of the cell cycle. Functions in the p53 and pRB tumor suppressor pathways and regulates the cyclin CCNA2 transcription. In Mus musculus (Mouse), this protein is Transcription factor E4F1 (E4f1).